The chain runs to 893 residues: Eukaryotic translation initiation factor 3 subunit A (893 aa).

The region spanning Leu319–Thr502 is the PCI domain. Coiled coils occupy residues Gln576–Arg707 and Glu784–Ala881. Disordered regions lie at residues Ala592–Ala634 and Ala837–Gln893. Over residues Ala837–Ala881 the composition is skewed to basic and acidic residues.

This sequence belongs to the eIF-3 subunit A family. Component of the eukaryotic translation initiation factor 3 (eIF-3) complex. The eIF-3 complex interacts with pix.

The protein localises to the cytoplasm. Functionally, RNA-binding component of the eukaryotic translation initiation factor 3 (eIF-3) complex, which is involved in protein synthesis of a specialized repertoire of mRNAs and, together with other initiation factors, stimulates binding of mRNA and methionyl-tRNAi to the 40S ribosome. The eIF-3 complex specifically targets and initiates translation of a subset of mRNAs involved in cell proliferation. This is Eukaryotic translation initiation factor 3 subunit A from Drosophila grimshawi (Hawaiian fruit fly).